The primary structure comprises 310 residues: MSYRGPIGNFGGMPMSSSQGPYSGGAQFRSNQNQSTSGILKQWKHSFEKFASRIEGLTDNAVVYKLKPYIPSLSRFFIVATFYEDSFRILSQWSDQIFYLNKWKHYPYFFVVVFLVVVTVSMLIGASLLVLRKQTNYATGVLCACVISQALVYGLFTGSSFVLRNFSVIGGLLIAFSDSIVQNKTTFGMLPELNSKNDKAKGYLLFAGRILIVLMFIAFTFSKSWFTVVLTIIGTICFAIGYKTKFASIMLGLILTFYNITLNNYWFYNNTKRDFLKYEFYQNLSIIGGLLLVTNTGAGELSVDEKKKIY.

The Cytoplasmic portion of the chain corresponds to 1 to 108 (MSYRGPIGNF…YLNKWKHYPY (108 aa)). Positions 11-31 (GGMPMSSSQGPYSGGAQFRSN) are disordered. Residues 109–129 (FFVVVFLVVVTVSMLIGASLL) form a helical membrane-spanning segment. The Lumenal segment spans residues 130–137 (VLRKQTNY). A helical transmembrane segment spans residues 138–158 (ATGVLCACVISQALVYGLFTG). Residues 159–209 (SSFVLRNFSVIGGLLIAFSDSIVQNKTTFGMLPELNSKNDKAKGYLLFAGR) lie on the Cytoplasmic side of the membrane. The chain crosses the membrane as a helical span at residues 210 to 230 (ILIVLMFIAFTFSKSWFTVVL). Topologically, residues 231-245 (TIIGTICFAIGYKTK) are lumenal. Residues 246–266 (FASIMLGLILTFYNITLNNYW) form a helical membrane-spanning segment. The Cytoplasmic portion of the chain corresponds to 267–310 (FYNNTKRDFLKYEFYQNLSIIGGLLLVTNTGAGELSVDEKKKIY). A Di-lysine motif motif is present at residues 307–310 (KKIY).

The protein belongs to the SURF4 family.

It is found in the endoplasmic reticulum membrane. In terms of biological role, constituent of COPII-coated endoplasmic reticulum-derived transport vesicles. Required for efficient transport of a subset of secretory proteins to the Golgi. The C-terminal di-lysine motif is required for exit from the endoplasmic reticulum. Required directly for packaging glycosylated pro-alpha-factor into COPII vesicles. Facilitates retrograde transport from the Golgi to the endoplasmic reticulum. This is ER-derived vesicles protein ERV29 (ERV29) from Saccharomyces cerevisiae (strain ATCC 204508 / S288c) (Baker's yeast).